The primary structure comprises 68 residues: Elastase inhibitor AFLEI (68 aa).

A disulfide bridge links cysteine 5 with cysteine 67.

It is found in the secreted. Its function is as follows. Elastase inhibitor. Inhibitor of A.flavus elastase with a Ki of 40 nM. Inhibitor of A.fumigatus elastase and human leukocyte elastase. Inhibits the fibrinogenase and collagenase activities of A.flavus elastase. Does not inhibit porcine pancreatic elastase, trypsin, chymotrypsin, thrombin or A.acutus AC1-proteinase. The sequence is that of Elastase inhibitor AFLEI from Aspergillus flavus.